Consider the following 230-residue polypeptide: Complex I assembly factor TMEM126B, mitochondrial (230 aa).

Position 34 is a phosphoserine (S34). 4 helical membrane-spanning segments follow: residues 72-92, 110-130, 141-161, and 199-219; these read IYQM…SNFL, LATL…IDAL, VFRS…SLAF, and IPLV…YAVF.

This sequence belongs to the TMEM126 family. Part of the mitochondrial complex I assembly/MCIA complex that comprises at least the core subunits TMEM126B, NDUFAF1, ECSIT and ACAD9 and complement subunits such as COA1 and TMEM186. Associates with the intermediate 370 kDa subcomplex of incompletely assembled complex I. Interacts with TMEM70.

The protein localises to the mitochondrion membrane. Functionally, as part of the MCIA complex, involved in the assembly of the mitochondrial complex I. Participates in constructing the membrane arm of complex I. In Homo sapiens (Human), this protein is Complex I assembly factor TMEM126B, mitochondrial.